Reading from the N-terminus, the 408-residue chain is Protein EcsB (408 aa).

Helical transmembrane passes span 30 to 50 (HLVI…SKWI), 53 to 73 (IPAH…VLTS), 111 to 131 (LFPL…VTPG), 134 to 154 (LVSY…NQVM), 180 to 200 (LVLY…YVIM), 284 to 304 (YLGI…YVSA), 308 to 328 (IAAV…LPLF), 351 to 371 (YFSL…VASA), and 374 to 394 (AGLT…FVVL).

The protein localises to the cell membrane. Functionally, presumed to form part of an ABC-transporter, it may form a transport channel. This is Protein EcsB (ecsB) from Bacillus subtilis (strain 168).